We begin with the raw amino-acid sequence, 308 residues long: Glycerol-3-phosphate dehydrogenase [NAD(P)+] (308 aa).

Residues W13, R33, and K81 each contribute to the NADPH site. The sn-glycerol 3-phosphate site is built by K81 and G109. A113 lines the NADPH pocket. Sn-glycerol 3-phosphate is bound by residues K163, D216, S226, R227, and N228. K163 functions as the Proton acceptor in the catalytic mechanism. R227 serves as a coordination point for NADPH. E253 is an NADPH binding site.

The protein belongs to the NAD-dependent glycerol-3-phosphate dehydrogenase family.

The protein resides in the cytoplasm. The catalysed reaction is sn-glycerol 3-phosphate + NAD(+) = dihydroxyacetone phosphate + NADH + H(+). The enzyme catalyses sn-glycerol 3-phosphate + NADP(+) = dihydroxyacetone phosphate + NADPH + H(+). Its pathway is membrane lipid metabolism; glycerophospholipid metabolism. In terms of biological role, catalyzes the reduction of the glycolytic intermediate dihydroxyacetone phosphate (DHAP) to sn-glycerol 3-phosphate (G3P), the key precursor for phospholipid synthesis. This chain is Glycerol-3-phosphate dehydrogenase [NAD(P)+], found in Thermosynechococcus vestitus (strain NIES-2133 / IAM M-273 / BP-1).